Here is a 742-residue protein sequence, read N- to C-terminus: Photosystem I P700 chlorophyll a apoprotein A2 (742 aa).

A run of 8 helical transmembrane segments spans residues 46-69 (LFST…FHIA), 135-158 (LFQA…LHLQ), 175-199 (LNHH…HVAI), 273-291 (IAHH…GHMY), 336-359 (LHFQ…QHMG), 375-401 (SALY…IFFV), 423-445 (ALIS…IYVH), and 525-543 (FLVH…LILI). Residues cysteine 567 and cysteine 576 each coordinate [4Fe-4S] cluster. A run of 2 helical transmembrane segments spans residues 583–604 (AMYL…YWHW) and 651–673 (LSPW…MFLI). Divinyl chlorophyll a is bound by residues histidine 662, methionine 670, and tyrosine 678. Tryptophan 679 provides a ligand contact to phylloquinone. A helical transmembrane segment spans residues 715-735 (LVGLAHFTIGNILTFGAFVIA).

Belongs to the PsaA/PsaB family. The PsaA/B heterodimer binds the P700 divinyl chlorophyll special pair and subsequent electron acceptors. PSI consists of a core antenna complex that captures photons, and an electron transfer chain that converts photonic excitation into a charge separation. The cyanobacterial PSI reaction center is composed of one copy each of PsaA,B,C,D,E,F,I,J,K,L,M and X, and forms trimeric complexes. PSI electron transfer chain: 5 divinyl chlorophyll a, 1 divinyl chlorophyll a', 2 phylloquinones and 3 4Fe-4S clusters. PSI core antenna: 90 divinyl chlorophyll a, 22 carotenoids, 3 phospholipids and 1 galactolipid. P700 is a divinyl chlorophyll a/divinyl chlorophyll a' dimer, A0 is one or more divinyl chlorophyll a, A1 is one or both phylloquinones and FX is a shared 4Fe-4S iron-sulfur center. is required as a cofactor.

It localises to the cellular thylakoid membrane. The catalysed reaction is reduced [plastocyanin] + hnu + oxidized [2Fe-2S]-[ferredoxin] = oxidized [plastocyanin] + reduced [2Fe-2S]-[ferredoxin]. Functionally, psaA and PsaB bind P700, the primary electron donor of photosystem I (PSI), as well as the electron acceptors A0, A1 and FX. PSI is a plastocyanin/cytochrome c6-ferredoxin oxidoreductase, converting photonic excitation into a charge separation, which transfers an electron from the donor P700 chlorophyll pair to the spectroscopically characterized acceptors A0, A1, FX, FA and FB in turn. Oxidized P700 is reduced on the lumenal side of the thylakoid membrane by plastocyanin or cytochrome c6. The protein is Photosystem I P700 chlorophyll a apoprotein A2 of Prochlorococcus marinus (strain MIT 9301).